The following is a 427-amino-acid chain: Phosphoribosylamine--glycine ligase (427 aa).

One can recognise an ATP-grasp domain in the interval arginine 109 to glutamate 313. Valine 136–threonine 191 lines the ATP pocket. Mg(2+)-binding residues include glutamine 271, glutamate 283, and asparagine 285. Mn(2+) contacts are provided by glutamine 271, glutamate 283, and asparagine 285.

This sequence belongs to the GARS family. Mg(2+) is required as a cofactor. Requires Mn(2+) as cofactor.

The enzyme catalyses 5-phospho-beta-D-ribosylamine + glycine + ATP = N(1)-(5-phospho-beta-D-ribosyl)glycinamide + ADP + phosphate + H(+). It participates in purine metabolism; IMP biosynthesis via de novo pathway; N(1)-(5-phospho-D-ribosyl)glycinamide from 5-phospho-alpha-D-ribose 1-diphosphate: step 2/2. The sequence is that of Phosphoribosylamine--glycine ligase from Methanoregula boonei (strain DSM 21154 / JCM 14090 / 6A8).